A 303-amino-acid polypeptide reads, in one-letter code: MDLILLIGIATALLIILLTLYFLQKRNAPAETKAAAQPQRGVPLRAQEGVPRRAQIARNQRNRLRANQNAPDAVAPVAAAPAAAIDPDGDEDGDENGPRVPQGAVLDEKMGAKKRAKMEAKEQKRLQREQELHDREQRKVKEAKEEAERKQQDDLDAEVERKRVEAERVVKELHERKEHEMYLKMKATFSVEEEGFEEDDADDKEADFIQYIKDNKVVLLEDLATTFKLKTQQAIERIQELQAEDTITGVIDDRGKFIYVSEAELAAVAKFIKQRGRVSIADLAESSNNLINLTPVTASEGGA.

Residues Met-1–Asp-2 lie on the Lumenal side of the membrane. The helical transmembrane segment at Leu-3–Leu-23 threads the bilayer. Residues Gln-24–Ala-303 are Cytoplasmic-facing. Disordered regions lie at residues Glu-31–Arg-53 and Ala-84–Glu-160. Basic and acidic residues predominate over residues Leu-106–Glu-160.

It belongs to the DDRGK1 family. Interacts with Atg9; the interaction is transient.

The protein resides in the endoplasmic reticulum membrane. Its function is as follows. Substrate adapter for ufmylation, the covalent attachment of the ubiquitin-like modifier UFM1 to substrate proteins. Required for ufmylation of Atg9; protects the nervous system during aging, possibly by stabilizing Atg9 and supporting its function. The sequence is that of DDRGK domain-containing protein 1 from Drosophila grimshawi (Hawaiian fruit fly).